Consider the following 315-residue polypeptide: piRNA biogenesis protein EXD1 (315 aa).

One can recognise a 3'-5' exonuclease domain in the interval 141–228 (IYIFDIQVMQ…ECLTNYLGLQ (88 aa)).

The protein belongs to the EXD1 family. As to quaternary structure, homodimer. Component of the PET complex, at least composed of EXD1, SIWI, TDRD12 and piRNAs.

The protein localises to the cytoplasm. Its function is as follows. RNA-binding component of the PET complex, a multiprotein complex required for the processing of piRNAs during spermatogenesis. The piRNA metabolic process mediates the repression of transposable elements during meiosis by forming complexes composed of piRNAs and Piwi proteins and governs the methylation and subsequent repression of transposable elements, preventing their mobilization, which is essential for the germline integrity. The PET complex is required during the secondary piRNAs metabolic process for the PIWIL2 slicing-triggered loading of PIWIL4 piRNAs. In the PET complex, EXD1 probably acts as an RNA adapter. EXD1 is an inactive exonuclease. The chain is piRNA biogenesis protein EXD1 from Bombyx mori (Silk moth).